The primary structure comprises 92 residues: METLPGLLQRPDPGALSAAQLEQLRKFKIQTRIANEKYLRTHKEVEWLISGFFREIFLKRPDNILEFAADYFTDPRLPNKIHMQLIKDKKAA.

The 35-residue stretch at 43-77 (KEVEWLISGFFREIFLKRPDNILEFAADYFTDPRL) folds into the RIIa domain.

This Homo sapiens (Human) protein is RIIa domain-containing protein 1 (RIIAD1).